The following is a 119-amino-acid chain: UPF0231 protein ECA3777 (119 aa).

This sequence belongs to the UPF0231 family.

This is UPF0231 protein ECA3777 from Pectobacterium atrosepticum (strain SCRI 1043 / ATCC BAA-672) (Erwinia carotovora subsp. atroseptica).